Reading from the N-terminus, the 304-residue chain is MGQCVTKCKNPSSTLGSKNGDRDPSNKSHSRRGASHREEQVPPCGKPAGDILVNGTKKAEAATEACQLPTSSGDAGRESKTNAEESSLQRLEELFRRYKDEREDAILEEGMERFCNDLCVDPTEFRVLLLAWKFQAATMCKFTRKEFFDGCKAISADSIDGICARFPSLLTEAKQEDKFKDLYRFTFQFGLDSEEGQRSLHREIAIALWKLVFTQNNPPVLDQWLNFLTENPSGIKGISRDTWNMFLNFTQVIGPDLSNYSEDEAWPSLFDTFVEWEMERRKREVEGRGTLSSGQEGLCPEEQT.

2 disordered regions span residues 1-87 and 284-304; these read MGQC…EESS and EVEG…EEQT. Gly-2 carries the N-myristoyl glycine lipid modification. Residues 86–278 form the DCUN1 domain; it reads SSLQRLEELF…LFDTFVEWEM (193 aa).

Part of a complex containing DCUN1D3, CUL3 and RBX1. Interacts (via the DCUN1 domain) with the unneddylated cullins: interacts with CUL1, CUL2, CUL3, CUL4A, CUL4B and CUL5; these interactions promote the cullin neddylation and the identity of the cullin dictates the affinity of the interaction. Interacts preferentially with CUL3; this interaction triggers the relocalization of CUL3 to the cell membrane where CUL3 is neddylated. Interacts (via DCUN1 domain) with RBX1. May also interact with regulators or subunits of cullin-RING ligases such as RNF7, ELOB and DDB1; these interactions are bridged by cullins. Interacts (via DCUN1 domain) with CAND1; this interaction is bridged by cullins and strongly inhibits cullin neddylation. These CAND-cullin-DCNL complexes can only be neddylated in the presence of a substrate adapter. Interacts (via DCUN1 domain) with the N-terminally acetylated form of UBE2M and UBE2F. As to expression, highest levels of expression are in the testis. Very low levels of expression in the heart, brain, skeletal muscle, kidney, liver, spleen, lung and ovary.

It is found in the cell membrane. The protein resides in the cytoplasm. The protein localises to the nucleus. Its subcellular location is the perinuclear region. Contributes to the neddylation of all cullins by transferring NEDD8 from N-terminally acetylated NEDD8-conjugating E2s enzyme to different cullin C-terminal domain-RBX complexes and may play a role in the cell cycle progression by regulating the SCF ubiquitin E3 ligase complex, after UV damage. At the cell membrane, can promote and as well inhibit cullins neddylation. The chain is DCN1-like protein 3 from Mus musculus (Mouse).